An 88-amino-acid polypeptide reads, in one-letter code: UPF0367 protein AM1_1885 (88 aa).

The protein belongs to the UPF0367 family.

The sequence is that of UPF0367 protein AM1_1885 from Acaryochloris marina (strain MBIC 11017).